A 383-amino-acid polypeptide reads, in one-letter code: MAYLSFKSNMERTPRESNTPCPPPQPSPSLFSSLPDDIVLNILARISTSYYQTLSLVSKTFRLLILSKELDMERSYLGTRKPCVYVCLQSPTHPFDRRWFGLWIKPYDHQPLTHWTIDIKCTGHWLLPMPSPYSRCLQIVHETVGSETYEIGGQNMTPSTDVWVYDKLIGKQRKAPSMMVARKNAFTCVLDGKLYVMGGCEADESTHWAEVFDPKTQTWEALPDPGVELRYSSVKNIQTKQGKVYVRSNKKNFVYLIKECMWEVAEENLGESTCEIENVCYCYSNKRYWWYDAKCEEWRLVKGVSGLYEYYKTDSEIGNYGGKLVVFWDRAVSRLTATKEIWCAMISLEKGHDGEIWGHIEWLDAVLIAPRSYALSHCMDFLQ.

The interval 1–27 (MAYLSFKSNMERTPRESNTPCPPPQPS) is disordered. An F-box domain is found at 28-79 (PSLFSSLPDDIVLNILARISTSYYQTLSLVSKTFRLLILSKELDMERSYLGT). 3 Kelch repeats span residues 147-192 (ETYE…VLDG), 193-239 (KLYV…NIQT), and 272-318 (STCE…SEIG).

In terms of biological role, involved in seed germination. The chain is F-box/kelch-repeat protein At4g19330 from Arabidopsis thaliana (Mouse-ear cress).